The chain runs to 201 residues: Large ribosomal subunit protein bL25 (201 aa).

The protein belongs to the bacterial ribosomal protein bL25 family. CTC subfamily. In terms of assembly, part of the 50S ribosomal subunit; part of the 5S rRNA/L5/L18/L25 subcomplex. Contacts the 5S rRNA. Binds to the 5S rRNA independently of L5 and L18.

This is one of the proteins that binds to the 5S RNA in the ribosome where it forms part of the central protuberance. The sequence is that of Large ribosomal subunit protein bL25 from Chlorobaculum parvum (strain DSM 263 / NCIMB 8327) (Chlorobium vibrioforme subsp. thiosulfatophilum).